We begin with the raw amino-acid sequence, 52 residues long: Conotoxin Cal6.25 (52 aa).

Positions 1 to 22 (MKLTHVLIVAVLVLTVCHLTMA) are cleaved as a signal peptide. 3 disulfides stabilise this stretch: Cys-24/Cys-41, Cys-31/Cys-45, and Cys-40/Cys-50.

In terms of tissue distribution, expressed by the venom duct.

It is found in the secreted. Probable neurotoxin. This chain is Conotoxin Cal6.25, found in Californiconus californicus (California cone).